Reading from the N-terminus, the 222-residue chain is Superoxide dismutase [Mn], mitochondrial (222 aa).

The transit peptide at Met-1–His-24 directs the protein to the mitochondrion. Mn(2+) is bound at residue His-50. Residue Tyr-58 is modified to 3'-nitrotyrosine. 2 positions are modified to N6-acetyllysine; alternate: Lys-68 and Lys-75. N6-succinyllysine; alternate occurs at positions 68 and 75. His-98 contacts Mn(2+). Lys-114 is subject to N6-acetyllysine. N6-acetyllysine; alternate is present on residues Lys-122 and Lys-130. An N6-succinyllysine; alternate mark is found at Lys-122 and Lys-130. Positions 183 and 187 each coordinate Mn(2+). Position 202 is an N6-acetyllysine (Lys-202).

The protein belongs to the iron/manganese superoxide dismutase family. As to quaternary structure, homotetramer. The cofactor is Mn(2+). Nitrated under oxidative stress. Nitration coupled with oxidation inhibits the catalytic activity. In terms of processing, acetylation at Lys-122 decreases enzymatic activity. Deacetylated by SIRT3 upon exposure to ionizing radiations or after long fasting. Post-translationally, polyubiquitinated; leading to proteasomal degradation. Deubiquitinated by USP36 which increases protein stability.

The protein localises to the mitochondrion matrix. It catalyses the reaction 2 superoxide + 2 H(+) = H2O2 + O2. In terms of biological role, destroys superoxide anion radicals which are normally produced within the cells and which are toxic to biological systems. In Mus musculus (Mouse), this protein is Superoxide dismutase [Mn], mitochondrial (Sod2).